Here is a 235-residue protein sequence, read N- to C-terminus: Pyridoxine 5'-phosphate synthase (235 aa).

Position 6 (asparagine 6) interacts with 3-amino-2-oxopropyl phosphate. Residue aspartate 8 to histidine 9 participates in 1-deoxy-D-xylulose 5-phosphate binding. 3-amino-2-oxopropyl phosphate is bound at residue arginine 17. Residue histidine 42 is the Proton acceptor of the active site. Residues arginine 44 and histidine 49 each coordinate 1-deoxy-D-xylulose 5-phosphate. Glutamate 69 functions as the Proton acceptor in the catalytic mechanism. Threonine 99 serves as a coordination point for 1-deoxy-D-xylulose 5-phosphate. Histidine 189 functions as the Proton donor in the catalytic mechanism. Residues glycine 190 and glycine 211–histidine 212 each bind 3-amino-2-oxopropyl phosphate.

It belongs to the PNP synthase family. In terms of assembly, homooctamer; tetramer of dimers.

It localises to the cytoplasm. It carries out the reaction 3-amino-2-oxopropyl phosphate + 1-deoxy-D-xylulose 5-phosphate = pyridoxine 5'-phosphate + phosphate + 2 H2O + H(+). It functions in the pathway cofactor biosynthesis; pyridoxine 5'-phosphate biosynthesis; pyridoxine 5'-phosphate from D-erythrose 4-phosphate: step 5/5. Catalyzes the complicated ring closure reaction between the two acyclic compounds 1-deoxy-D-xylulose-5-phosphate (DXP) and 3-amino-2-oxopropyl phosphate (1-amino-acetone-3-phosphate or AAP) to form pyridoxine 5'-phosphate (PNP) and inorganic phosphate. The sequence is that of Pyridoxine 5'-phosphate synthase from Chlorobium luteolum (strain DSM 273 / BCRC 81028 / 2530) (Pelodictyon luteolum).